A 533-amino-acid polypeptide reads, in one-letter code: Ribonuclease III domain-containing protein RNC1, chloroplastic (533 aa).

The N-terminal 30 residues, 1–30 (MAPPAMAFQALALGPLPLPLPAARRRRRVR), are a transit peptide targeting the chloroplast. Disordered stretches follow at residues 31–57 (VLAV…NSPS) and 66–85 (RKKA…ILKP). The span at 39-53 (TPPPPPSPSSPPEPA) shows a compositional bias: pro residues. A compositionally biased stretch (basic residues) spans 69–82 (AVSPKKKHPPRRFI). RNase III domains follow at residues 164 to 279 (LLYL…LCFG) and 411 to 511 (EHPR…CVYG).

Interacts with RNA. Part of large ribonucleo-protein particles that contain CAF1 and/or CAF2.

It localises to the plastid. The protein resides in the chloroplast. Its function is as follows. Binds specific group II introns in chloroplasts and facilitates their splicing. Acts on both subgroup IIA and subgroup IIB introns. The substrates of the subgroup II also require the CRM domain proteins CAF1 or CAF2. Binds both single-stranded and double-stranded RNA non-specifically, but lacks endonuclease activity. Required for plastid ribosome biogenesis. The protein is Ribonuclease III domain-containing protein RNC1, chloroplastic of Oryza sativa subsp. japonica (Rice).